The chain runs to 273 residues: 29 kDa ribonucleoprotein A, chloroplastic (273 aa).

A chloroplast-targeting transit peptide spans 1–58 (MASSASSLHFLSLTPQTLPLPKPTSQTTSLSFFSLPPSSLNLSLSSSSSCFSSRFVRK). The 79-residue stretch at 87–165 (LKIFVGNLPF…RALRVNSGPP (79 aa)) folds into the RRM 1 domain. Positions 156–181 (RALRVNSGPPPEKRENSSFRGGSRGG) are disordered. Positions 166 to 187 (PEKRENSSFRGGSRGGGSFDSS) are linker (Gly-rich). The RRM 2 domain maps to 188-266 (NRVYVGNLAW…RAIRVSPAEA (79 aa)).

It is found in the plastid. Its subcellular location is the chloroplast. Functionally, could be involved in splicing and/or processing of chloroplast RNA's. This chain is 29 kDa ribonucleoprotein A, chloroplastic, found in Nicotiana sylvestris (Wood tobacco).